Reading from the N-terminus, the 128-residue chain is MAYRKLGRTSSQRKAMLRDLTTDLLINESIVTSEARAKEIRNTVEKMITLGKRGDLHACGQAAAFVRNVIASADYDEATDKYTSATALHKLFSEIAPLYADRTVRYTRILKTEPRRGDAAPMAIIELV.

It belongs to the bacterial ribosomal protein bL17 family. As to quaternary structure, part of the 50S ribosomal subunit. Contacts protein L32.

This is Large ribosomal subunit protein bL17 from Streptococcus suis (strain 98HAH33).